We begin with the raw amino-acid sequence, 127 residues long: MPTYHQILKNPRRKKMHTNNVKALEGCPQKKGVCVKLRIVKPKKPNSAQRKVAKLRLSTRRMIIAYIPGQGHNLQEYSSVLVSGGRAPDLPGVRYTLIKGKYDFSWKESFERKKKLSKYGYSTKKKF.

It belongs to the universal ribosomal protein uS12 family.

The protein resides in the mitochondrion. This chain is Small ribosomal subunit protein uS12m (RPS12), found in Acanthamoeba castellanii (Amoeba).